The following is a 443-amino-acid chain: MSGAADGTVPVGEDTHQEDSGERECEQRPVHSGREATGESDPALERPDHGERHGPEPRFPSFSVRPEAAQPPPSRTIARESFLGRFITDCLKWKNDVVKIDPNICKDPFPSDDEIFGNIGSHSTLLRELHECAYRYQKAVNASHPLLQRDGSLKTLNYGVQPFIVTVYGPTGSGKSQFLRNVISSKMIDPPPETVFFVTPEKGTVTNEEKLSWEAQCAEGVYNSKCVPITKTFQPAFVNLSFSEAVDEENLSIDSPNNVFVQAAKKGPICIIIDECMNQLGACRSISSFFHALPSKIFGRFPACTGYTVLVVLHNMNPRSDRGNIKDLKIQSKCHIISPQLESQQVSRFIKNFSFGFPTPLVSVIKDIVDHAKMHSKFSWLVYCSVPVRESFRWSYYSPEDQLTPLYVDLQAVMYEACHNIRRVFCKRLYSRVSYANKRKWYD.

Residues 1 to 75 (MSGAADGTVP…PEAAQPPPSR (75 aa)) form a disordered region. Residues 13-56 (EDTHQEDSGERECEQRPVHSGREATGESDPALERPDHGERHGPE) are compositionally biased toward basic and acidic residues. Residue 169-176 (GPTGSGKS) coordinates ATP. The tract at residues 433–443 (VSYANKRKWYD) is DNA-binding.

Belongs to the adenoviridae packaging protein 1 family. Homodimer. Part of a genome packaging complex composed of packaging proteins 1, 2 and 3; this complex specifically binds to the packaging sequence on the left end of viral genomic DNA and performs packaging of the viral genome. Interacts with protein 33K.

The protein resides in the virion. It localises to the host nucleus. It is found in the host nucleoplasm. Its subcellular location is the host nucleolus. In terms of biological role, component of the packaging machinery which encapsidates the viral DNA into preformed capsids and transcriptional activator of the viral major late promoter (MLP). Binds, along with packaging proteins 2 and 3, to the specific packaging sequence on the left end of viral genomic DNA and displays ATPase activity thereby providing the power stroke of the packaging machinery. The activity of packaging protein IVa2 is stimulated by protein 33K which acts as a terminase. May be the protein that pumps DNA into the capsid powered by ATP hydrolysis. Specifically binds to the 5'-CG-3' nucleotides of the repeats making up the packaging sequence. Component of the DEF-A and DEF-B transcription factors that bind downstream elements of the major late promoter (MLP), and stimulate transcription from the MLP after initiation of viral DNA replication. DEF-A is a heterodimer packaging proteins 1 and 2 and DEF-B is a homodimer of packaging protein 1. The protein is Packaging protein 1 of Pantherophis guttatus (Corn snake).